Here is a 232-residue protein sequence, read N- to C-terminus: Protein FAM228B (232 aa).

It belongs to the FAM228 family.

This chain is Protein FAM228B (Fam228b), found in Mus musculus (Mouse).